The sequence spans 571 residues: RUN and FYVE domain-containing protein 4 (571 aa).

In terms of domain architecture, RUN spans 33 to 166; the sequence is TDTSAELHRL…VAFELDLQQP (134 aa). The segment at 174–207 is disordered; that stretch reads MFSESRCSSSTQTQGRRPRKNKDAPKKIPAAYGG. Residues 178-188 are compositionally biased toward polar residues; the sequence is SRCSSSTQTQG. Residues 408 to 481 are a coiled coil; it reads EVSLQDEIKS…ERRDAMYQEE (74 aa). Residues 474–567 form an FYVE-type zinc finger; sequence RDAMYQEELG…CCPPCAQGRE (94 aa). Residues Cys-521, Cys-524, Cys-537, Cys-540, Cys-545, Cys-548, Cys-559, and Cys-562 each contribute to the Zn(2+) site.

As to quaternary structure, forms homodimers (via coiled coil domain). Interacts with RAB7A. Forms a ternary complex with RAB7A and LAMP2; the interaction with RAB7A is mediated by RUFY4 (via RUN and coiled coil domains). Interacts with GTP-, but not GDP-bound ARL8A and ARL8B. Interacts with dynactin/DCTN1 and the dynein intermediate chain DYNC1I1/2.

The protein resides in the cytoplasmic vesicle. It localises to the autophagosome. Its subcellular location is the lysosome. In terms of biological role, ARL8 effector that promotes the coupling of endolysosomes to dynein-dynactin for retrograde transport along microtubules. Acts by binding both GTP-bound ARL8 and dynein-dynactin. In nonneuronal cells, promotes concentration of endolysosomes in the juxtanuclear area. In hippocampal neurons, drives retrograde transport of endolysosomes from the axon to the soma. Positive regulator of macroautophagy in dendritic cells. Increases autophagic flux, probably by stimulating both autophagosome formation and facilitating tethering with lysosomes. Binds to phosphatidylinositol 3-phosphate (PtdIns3P) through its FYVE-type zinc finger. Positive regulator of osteosclast bone-resorbing activity, possibly by promoting late endosome-lysosome fusion by acting as an adapter protein between RAB7A on late endosomes and LAMP2 on primary lysosomes. The polypeptide is RUN and FYVE domain-containing protein 4 (RUFY4) (Homo sapiens (Human)).